Reading from the N-terminus, the 273-residue chain is Putative pyruvate, phosphate dikinase regulatory protein (273 aa).

151–158 contributes to the ADP binding site; that stretch reads GVSRTSKT.

Belongs to the pyruvate, phosphate/water dikinase regulatory protein family. PDRP subfamily.

It carries out the reaction N(tele)-phospho-L-histidyl/L-threonyl-[pyruvate, phosphate dikinase] + ADP = N(tele)-phospho-L-histidyl/O-phospho-L-threonyl-[pyruvate, phosphate dikinase] + AMP + H(+). The catalysed reaction is N(tele)-phospho-L-histidyl/O-phospho-L-threonyl-[pyruvate, phosphate dikinase] + phosphate + H(+) = N(tele)-phospho-L-histidyl/L-threonyl-[pyruvate, phosphate dikinase] + diphosphate. Bifunctional serine/threonine kinase and phosphorylase involved in the regulation of the pyruvate, phosphate dikinase (PPDK) by catalyzing its phosphorylation/dephosphorylation. The chain is Putative pyruvate, phosphate dikinase regulatory protein from Desulfitobacterium hafniense (strain Y51).